Consider the following 379-residue polypeptide: Oxidized polyvinyl alcohol hydrolase (379 aa).

The first 23 residues, 1 to 23, serve as a signal peptide directing secretion; sequence MNQSLGVLRLTRGVIALALASVA. Residues serine 203 and serine 309 each act as charge relay system in the active site.

This sequence belongs to the peptidase S9A family. In terms of assembly, monomer.

The enzyme catalyses nonane-4,6-dione + H2O = pentan-2-one + butanoate + H(+). Catalyzes the hydrolysis of 4,6-nonanedione, a beta-diketone compound. Also mediates hydrolysis of oxidized polyvinyl alcohol (PVA) in the second step in the degradation of polyvinyl alcohol. Not active toward the monoketone structure. The sequence is that of Oxidized polyvinyl alcohol hydrolase (pvaB) from Pseudomonas sp.